Here is a 685-residue protein sequence, read N- to C-terminus: A-type ATP synthase subunit I (685 aa).

A run of 7 helical transmembrane segments spans residues Val-172–Pro-192, Glu-348–Pro-368, Val-394–Gly-414, Leu-464–Ile-484, Leu-538–Tyr-558, Met-604–Val-624, and Ala-626–Ala-646.

It belongs to the V-ATPase 116 kDa subunit family. In terms of assembly, has multiple subunits with at least A(3), B(3), C, D, E, F, H, I and proteolipid K(x).

It localises to the cell membrane. Component of the A-type ATP synthase that produces ATP from ADP in the presence of a proton gradient across the membrane. This Aeropyrum pernix (strain ATCC 700893 / DSM 11879 / JCM 9820 / NBRC 100138 / K1) protein is A-type ATP synthase subunit I.